The following is a 255-amino-acid chain: MRIFVFLVLLTVAIGTENLNSHVFPRPLIIEYPEKQLRDELKCTTWRFVVETNNLSPWKTIPEECADYVKEYMVGPGYKMEIDRVSDEAGEYAKSVDLGDDGRDVWIFDVDETLLSNLPYYSDHRYGLEVFDDVEFDKWVENGTAPALGSSLKLYQEVLKLGFKVFLLTGRSERHRSVTVENLMNAGFHDWHKLILRGSDDHGKTATTYKSERRNAMVEEGFRIVGNSGDQWSDLLGSSMSYRSFKLPNPMYYIL.

An N-terminal signal peptide occupies residues 1–15; the sequence is MRIFVFLVLLTVAIG. The N-linked (GlcNAc...) asparagine glycan is linked to N142.

It belongs to the APS1/VSP family.

The enzyme catalyses a phosphate monoester + H2O = an alcohol + phosphate. The sequence is that of Acid phosphatase 1 (APS1) from Solanum lycopersicum (Tomato).